We begin with the raw amino-acid sequence, 113 residues long: Probable 4-amino-4-deoxy-L-arabinose-phosphoundecaprenol flippase subunit ArnE (113 aa).

The next 3 membrane-spanning stretches (helical) occupy residues 40–60, 64–84, and 92–112; these read FGWL…WLLV, LPLG…TLLA, and VDRH…LMQG.

The protein belongs to the ArnE family. In terms of assembly, heterodimer of ArnE and ArnF.

Its subcellular location is the cell inner membrane. Its pathway is bacterial outer membrane biogenesis; lipopolysaccharide biosynthesis. Translocates 4-amino-4-deoxy-L-arabinose-phosphoundecaprenol (alpha-L-Ara4N-phosphoundecaprenol) from the cytoplasmic to the periplasmic side of the inner membrane. This is Probable 4-amino-4-deoxy-L-arabinose-phosphoundecaprenol flippase subunit ArnE from Pectobacterium atrosepticum (strain SCRI 1043 / ATCC BAA-672) (Erwinia carotovora subsp. atroseptica).